The primary structure comprises 1028 residues: Contactin-6 (1028 aa).

The signal sequence occupies residues 1–19; that stretch reads MRLLWKLVILLPLINSSAG. 6 Ig-like C2-type domains span residues 26–117, 122–208, 227–308, 318–402, 408–495, and 499–587; these read PIFT…AKLQ, EDFE…RSVQ, PKIE…RNLA, PEWE…AELR, PDFS…GSLI, and RTVI…ESLS. 6 disulfides stabilise this stretch: cysteine 50–cysteine 100, cysteine 144–cysteine 196, cysteine 249–cysteine 297, cysteine 339–cysteine 386, cysteine 431–cysteine 479, and cysteine 521–cysteine 577. N-linked (GlcNAc...) asparagine glycans are attached at residues asparagine 65 and asparagine 193. N-linked (GlcNAc...) asparagine glycosylation is found at asparagine 368, asparagine 377, and asparagine 468. Fibronectin type-III domains lie at 600–698, 703–800, 805–901, and 902–996; these read PPED…TKAS, APVN…SGED, APRG…TKKS, and PPSQ…KMSS. Asparagine 659, asparagine 765, asparagine 860, and asparagine 865 each carry an N-linked (GlcNAc...) asparagine glycan. Phosphotyrosine is present on tyrosine 882. Over residues 887 to 902 the composition is skewed to polar residues; sequence TGPSSPPVNVTTKKSP. Residues 887 to 908 are disordered; it reads TGPSSPPVNVTTKKSPPSQPPA. 4 N-linked (GlcNAc...) asparagine glycosylation sites follow: asparagine 895, asparagine 931, asparagine 956, and asparagine 957. Serine 999 carries the GPI-anchor amidated serine lipid modification. Positions 1000–1028 are cleaved as a propeptide — removed in mature form; the sequence is RGIQFLEPSTHFLSIVIVIFHCFAIQPLI.

This sequence belongs to the immunoglobulin superfamily. Contactin family. Interacts with PTPRG. In terms of tissue distribution, expressed in nervous system. Highly expressed in cerebellum. Expressed at intermediate level in thalamus, subthalamic nucleus. Weakly expressed in corpus callosum, caudate nucleus and spinal cord.

It is found in the cell membrane. Its function is as follows. Contactins mediate cell surface interactions during nervous system development. Participates in oligodendrocytes generation by acting as a ligand of NOTCH1. Its association with NOTCH1 promotes NOTCH1 activation through the released notch intracellular domain (NICD) and subsequent translocation to the nucleus. Involved in motor coordination. In Homo sapiens (Human), this protein is Contactin-6 (CNTN6).